The sequence spans 830 residues: Frameshifted structural polyprotein (830 aa).

Positions 58–109 (AIAPARPPKPKKKKTTKPKPKTQPKKINGKTQQQKKKDKQADKKKKKPGKRE) are disordered. Residues 65-107 (PKPKKKKTTKPKPKTQPKKINGKTQQQKKKDKQADKKKKKPGK) show a composition bias toward basic residues. A ribosome-binding region spans residues 94–106 (KDKQADKKKKKPG). A disulfide bond links cysteine 119 and cysteine 134. A Peptidase S3 domain is found at 119-267 (CIFEVKHEGK…RVTPEGSEEW (149 aa)). Catalysis depends on charge relay system residues histidine 145, aspartate 167, and serine 219. Asparagine 280, asparagine 327, asparagine 533, and asparagine 595 each carry an N-linked (GlcNAc...) asparagine; by host glycan. A helical membrane pass occupies residues 702 to 722 (AVVGMSLLALISIFASCYMLV). Residues cysteine 718, cysteine 728, cysteine 748, and cysteine 749 are each lipidated (S-palmitoyl cysteine; by host). The transient transmembrane before p62-6K protein processing stretch occupies residues 728 to 748 (CLTPYALTPGAAVPWTLGILC). Helical transmembrane passes span 771–791 (ALFW…TYCL) and 793–813 (NVLC…RGHR).

As to quaternary structure, homodimer. Homomultimer. Interacts with host karyopherin KPNA4; this interaction allows the nuclear import of the viral capsid protein. Precursor of protein E3/E2: The precursor of protein E3/E2 and E1 form a heterodimer shortly after synthesis. Interacts with host IRAK1; the interaction leads to inhibition of IRAK1-dependent signaling. In terms of assembly, processing of the precursor of protein E3/E2 into E2 and E3 results in a heterodimer of the spike glycoproteins E2 and E1. Spike at virion surface are constituted of three E2-E1 heterodimers. Interacts with 6K protein. Interacts with host MXRA8; this interaction mediates virus entry. Post-translationally, specific enzymatic cleavages in vivo yield mature proteins. Capsid protein is auto-cleaved during polyprotein translation, unmasking a signal peptide at the N-terminus of the precursor of E3/E2. The remaining polyprotein is then targeted to the host endoplasmic reticulum, where host signal peptidase cleaves it into pE2 and TF. pE2 is further processed to mature E3 and E2 by host furin in trans-Golgi vesicle.

It localises to the virion. The protein resides in the host cytoplasm. It is found in the host cell membrane. Its subcellular location is the host nucleus. The protein localises to the virion membrane. It carries out the reaction Autocatalytic release of the core protein from the N-terminus of the togavirus structural polyprotein by hydrolysis of a -Trp-|-Ser- bond.. Its function is as follows. Forms an icosahedral capsid with a T=4 symmetry composed of 240 copies of the capsid protein surrounded by a lipid membrane through which penetrate 80 spikes composed of trimers of E1-E2 heterodimers. The capsid protein binds to the viral RNA genome at a site adjacent to a ribosome binding site for viral genome translation following genome release. Possesses a protease activity that results in its autocatalytic cleavage from the nascent structural protein. Following its self-cleavage, the capsid protein transiently associates with ribosomes, and within several minutes the protein binds to viral RNA and rapidly assembles into icosahedric core particles. The resulting nucleocapsid eventually associates with the cytoplasmic domain of the spike glycoprotein E2 at the cell membrane, leading to budding and formation of mature virions. In case of infection, new virions attach to target cells and after clathrin-mediated endocytosis their membrane fuses with the host endosomal membrane. This leads to the release of the nucleocapsid into the cytoplasm, followed by an uncoating event necessary for the genomic RNA to become accessible. The uncoating might be triggered by the interaction of capsid proteins with ribosomes. Binding of ribosomes would release the genomic RNA since the same region is genomic RNA-binding and ribosome-binding. Specifically inhibits interleukin-1 receptor-associated kinase 1/IRAK1-dependent signaling during viral entry, representing a means by which the alphaviruses may evade innate immune detection and activation prior to viral gene expression. In terms of biological role, provides the signal sequence for p62 (E3/E2) translocation to the host endoplasmic reticulum. Mediates pH protection of E1 during secretory pathway trans- port. Plays a role in viral attachment to target host cell, by binding to the cell receptor. Synthesized as a p62 precursor which is processed by furin at the cell membrane just before virion budding, giving rise to E2-E1 heterodimer. The p62-E1 heterodimer is stable, whereas E2-E1 is unstable and dissociate at low pH. p62 is processed at the last step, presumably to avoid E1 fusion activation before its final export to cell surface. E2 C-terminus contains a transitory transmembrane that would be disrupted by palmitoylation, resulting in reorientation of the C-terminal tail from lumenal to cytoplasmic side. This step is critical since E2 C-terminus is involved in budding by interacting with capsid proteins. This release of E2 C-terminus in cytoplasm occurs lately in protein export, and precludes premature assembly of particles at the endoplasmic reticulum membrane. Functionally, virion component that may play a role during viral assembly. This chain is Frameshifted structural polyprotein, found in Aedes (Middle-African hedgehog).